The primary structure comprises 105 residues: Phosphoribosyl-ATP pyrophosphatase (105 aa).

Belongs to the PRA-PH family.

It localises to the cytoplasm. It carries out the reaction 1-(5-phospho-beta-D-ribosyl)-ATP + H2O = 1-(5-phospho-beta-D-ribosyl)-5'-AMP + diphosphate + H(+). It functions in the pathway amino-acid biosynthesis; L-histidine biosynthesis; L-histidine from 5-phospho-alpha-D-ribose 1-diphosphate: step 2/9. In Ruthia magnifica subsp. Calyptogena magnifica, this protein is Phosphoribosyl-ATP pyrophosphatase.